The following is a 289-amino-acid chain: Shikimate dehydrogenase (NADP(+)) (289 aa).

Shikimate contacts are provided by residues 19 to 21 (SLS) and Thr-66. The active-site Proton acceptor is Lys-70. 2 residues coordinate shikimate: Asn-91 and Asp-106. NADP(+)-binding positions include 131-135 (GNGGA) and Leu-229. Tyr-231 provides a ligand contact to shikimate. Gly-252 is an NADP(+) binding site.

This sequence belongs to the shikimate dehydrogenase family. In terms of assembly, homodimer.

The enzyme catalyses shikimate + NADP(+) = 3-dehydroshikimate + NADPH + H(+). It functions in the pathway metabolic intermediate biosynthesis; chorismate biosynthesis; chorismate from D-erythrose 4-phosphate and phosphoenolpyruvate: step 4/7. In terms of biological role, involved in the biosynthesis of the chorismate, which leads to the biosynthesis of aromatic amino acids. Catalyzes the reversible NADPH linked reduction of 3-dehydroshikimate (DHSA) to yield shikimate (SA). The protein is Shikimate dehydrogenase (NADP(+)) of Trichormus variabilis (strain ATCC 29413 / PCC 7937) (Anabaena variabilis).